A 172-amino-acid chain; its full sequence is Large ribosomal subunit protein uL10 (172 aa).

This sequence belongs to the universal ribosomal protein uL10 family. In terms of assembly, part of the ribosomal stalk of the 50S ribosomal subunit. The N-terminus interacts with L11 and the large rRNA to form the base of the stalk. The C-terminus forms an elongated spine to which L12 dimers bind in a sequential fashion forming a multimeric L10(L12)X complex.

Forms part of the ribosomal stalk, playing a central role in the interaction of the ribosome with GTP-bound translation factors. The protein is Large ribosomal subunit protein uL10 (rplJ) of Liberibacter africanus (Citrus greening disease).